We begin with the raw amino-acid sequence, 302 residues long: Acetylglutamate kinase (302 aa).

Residues 75 to 76 (GG), Arg97, and Asn198 contribute to the substrate site.

It belongs to the acetylglutamate kinase family. ArgB subfamily.

Its subcellular location is the cytoplasm. It carries out the reaction N-acetyl-L-glutamate + ATP = N-acetyl-L-glutamyl 5-phosphate + ADP. The protein operates within amino-acid biosynthesis; L-arginine biosynthesis; N(2)-acetyl-L-ornithine from L-glutamate: step 2/4. Catalyzes the ATP-dependent phosphorylation of N-acetyl-L-glutamate. In Leifsonia xyli subsp. xyli (strain CTCB07), this protein is Acetylglutamate kinase.